Reading from the N-terminus, the 171-residue chain is Adenine phosphoribosyltransferase (171 aa).

This sequence belongs to the purine/pyrimidine phosphoribosyltransferase family. As to quaternary structure, homodimer.

It is found in the cytoplasm. It carries out the reaction AMP + diphosphate = 5-phospho-alpha-D-ribose 1-diphosphate + adenine. Its pathway is purine metabolism; AMP biosynthesis via salvage pathway; AMP from adenine: step 1/1. Its function is as follows. Catalyzes a salvage reaction resulting in the formation of AMP, that is energically less costly than de novo synthesis. This chain is Adenine phosphoribosyltransferase, found in Natranaerobius thermophilus (strain ATCC BAA-1301 / DSM 18059 / JW/NM-WN-LF).